The chain runs to 595 residues: Tumor necrosis factor receptor superfamily member 8 (595 aa).

An N-terminal signal peptide occupies residues 1-18 (MRVLLAALGLLFLGALRA). Topologically, residues 19-385 (FPQDRPFEDT…STGKPVLDAG (367 aa)) are extracellular. TNFR-Cys repeat units lie at residues 28-66 (TCHG…TDCR), 68-106 (QCEP…SRVC), and 107-150 (ECRP…TVCE). 8 cysteine pairs are disulfide-bonded: Cys-29–Cys-44, Cys-45–Cys-58, Cys-48–Cys-65, Cys-69–Cys-81, Cys-84–Cys-98, Cys-87–Cys-106, Cys-108–Cys-122, and Cys-131–Cys-149. N-linked (GlcNAc...) asparagine glycosylation occurs at Asn-32. The N-linked (GlcNAc...) asparagine glycan is linked to Asn-101. A disordered region spans residues 167 to 238 (KEPSSGTIPQ…PTQPCPEGSG (72 aa)). Residues 179 to 194 (PTPVSPATSSASTMPV) are compositionally biased toward low complexity. TNFR-Cys repeat units lie at residues 205–241 (ASKL…GDCR), 243–281 (QCEP…SRTC), and 282–325 (ECRP…TTFE). Disulfide bonds link Cys-233/Cys-240, Cys-244/Cys-256, Cys-259/Cys-273, Cys-262/Cys-281, Cys-283/Cys-297, and Cys-289/Cys-300. The N-linked (GlcNAc...) asparagine glycan is linked to Asn-276. A disordered region spans residues 323–355 (TFEAPPLGTQPDCNPTPENGEAPASTSPTQSLL). Asn-336 carries an N-linked (GlcNAc...) asparagine glycan. The segment covering 346 to 355 (ASTSPTQSLL) has biased composition (polar residues). Residues 386–406 (PVLFWVILVLVVVVGSSAFLL) traverse the membrane as a helical segment. Over 407 to 595 (CHRRACRKRI…DPLPTAASGK (189 aa)) the chain is Cytoplasmic. Phosphoserine occurs at positions 438 and 452. Disordered regions lie at residues 438–457 (SRPR…TEPV), 485–509 (LQDA…STEH), and 536–595 (EGRG…ASGK). Over residues 443–452 (SSTQLRSGAS) the composition is skewed to polar residues. Positions 499 to 509 (DLPEPRVSTEH) are enriched in basic and acidic residues.

This sequence belongs to the TNFR8 family. As to quaternary structure, interacts with TRAF1, TRAF2, TRAF3 and TRAF5. Phosphorylated on serine and tyrosine residues. Isoform 2 is constitutively phosphorylated. As to expression, detected in alveolar macrophages (at protein level).

It is found in the cell membrane. Its subcellular location is the cytoplasm. Receptor for TNFSF8/CD30L. May play a role in the regulation of cellular growth and transformation of activated lymphoblasts. Regulates gene expression through activation of NF-kappa-B. The polypeptide is Tumor necrosis factor receptor superfamily member 8 (Homo sapiens (Human)).